A 259-amino-acid chain; its full sequence is uncharacterized protein (259 aa).

Disordered regions lie at residues 22–68 (GLQP…VSFG), 111–133 (REEQKLRKRSRQNDDGSDDDEVE), and 181–202 (LGGKKETEKMPMAARRGMKKKQ). Residues 50-63 (NEEEDAISDMEDKE) show a composition bias toward acidic residues. The residue at position 127 (Ser-127) is a Phosphoserine.

This is an uncharacterized protein from Schizosaccharomyces pombe (strain 972 / ATCC 24843) (Fission yeast).